The sequence spans 255 residues: Thiazole synthase (255 aa).

The Schiff-base intermediate with DXP role is filled by lysine 96. Residues glycine 157, 183–184, and 205–206 contribute to the 1-deoxy-D-xylulose 5-phosphate site; these read AG and NT.

Belongs to the ThiG family. In terms of assembly, homotetramer. Forms heterodimers with either ThiH or ThiS.

It localises to the cytoplasm. The enzyme catalyses [ThiS sulfur-carrier protein]-C-terminal-Gly-aminoethanethioate + 2-iminoacetate + 1-deoxy-D-xylulose 5-phosphate = [ThiS sulfur-carrier protein]-C-terminal Gly-Gly + 2-[(2R,5Z)-2-carboxy-4-methylthiazol-5(2H)-ylidene]ethyl phosphate + 2 H2O + H(+). Its pathway is cofactor biosynthesis; thiamine diphosphate biosynthesis. Catalyzes the rearrangement of 1-deoxy-D-xylulose 5-phosphate (DXP) to produce the thiazole phosphate moiety of thiamine. Sulfur is provided by the thiocarboxylate moiety of the carrier protein ThiS. In vitro, sulfur can be provided by H(2)S. The polypeptide is Thiazole synthase (Anoxybacillus flavithermus (strain DSM 21510 / WK1)).